A 235-amino-acid polypeptide reads, in one-letter code: Small ribosomal subunit protein uS2c (235 aa).

The protein belongs to the universal ribosomal protein uS2 family.

It localises to the plastid. The protein localises to the chloroplast. The protein is Small ribosomal subunit protein uS2c (rps2) of Cryptomeria japonica (Japanese cedar).